Reading from the N-terminus, the 104-residue chain is Defensin-2 (104 aa).

A signal peptide spans 1-19 (MKFFVLFAILIAIVHASCA). 3 disulfide bridges follow: Cys-64–Cys-95, Cys-81–Cys-100, and Cys-85–Cys-102.

The protein belongs to the invertebrate defensin family. Type 1 subfamily. As to expression, low expression in head and thorax.

The protein localises to the secreted. Antibacterial peptide mostly active against Gram-positive bacteria. This chain is Defensin-2, found in Apis mellifera (Honeybee).